The sequence spans 354 residues: Abasic site processing protein HMCES (354 aa).

C2 acts as the Nucleophile in catalysis. C2 bears the Thiazolidine linkage to a ring-opened DNA abasic site mark. E127 is a catalytic residue. Glycyl lysine isopeptide (Lys-Gly) (interchain with G-Cter in SUMO2) cross-links involve residues K148 and K151. A Phosphoserine modification is found at S160. K276 is covalently cross-linked (Glycyl lysine isopeptide (Lys-Gly) (interchain with G-Cter in SUMO2)). The disordered stretch occupies residues 292–354 (ATKSPKKEDS…EPVAKRPYSQ (63 aa)). S295 carries the post-translational modification Phosphoserine. The segment covering 296-309 (PKKEDSKTPQKEES) has biased composition (basic and acidic residues). K306 participates in a covalent cross-link: Glycyl lysine isopeptide (Lys-Gly) (interchain with G-Cter in SUMO2). At S322 the chain carries Phosphoserine. A PIP-box motif is present at residues 332-338 (GLLEQWL). Positions 337-348 (WLKREKEEEPVA) are enriched in basic and acidic residues. Residues K339 and K342 each participate in a glycyl lysine isopeptide (Lys-Gly) (interchain with G-Cter in SUMO2) cross-link.

Belongs to the SOS response-associated peptidase family. Interacts (via PIP-box motif) with PCNA. In terms of processing, ubiquitinated; the covalent HMCES DNA-protein cross-link is ubiquitinated, leading to its degradation by the proteasome.

Its subcellular location is the chromosome. Formation and reversal of DNA-protein cross-link depends on DNA context. Catalyzes formation of the thiazolidine linkage in presence of abasic sites in single-stranded DNA. Mediates the reversal of the thiazolidine cross-link in presence of double stranded DNA. In terms of biological role, sensor of abasic sites in single-stranded DNA (ssDNA) required to preserve genome integrity by promoting error-free repair of abasic sites. Acts as an enzyme that recognizes and binds abasic sites in ssDNA at replication forks and chemically modifies the lesion by forming a covalent cross-link with DNA: forms a stable thiazolidine linkage between a ring-opened abasic site and the alpha-amino and sulfhydryl substituents of its N-terminal catalytic cysteine residue. Promotes error-free repair by protecting abasic sites from translesion synthesis (TLS) polymerases and endonucleases that are error-prone and would generate mutations and double-strand breaks. The HMCES DNA-protein cross-link is then either reversed or degraded. HMCES is able to catalyze the reversal of its thiazolidine cross-link and cycle between a cross-link and a non-cross-linked state depending on DNA context: mediates self-reversal of the thiazolidine cross-link in double stranded DNA, allowing APEX1 to initiate downstream repair of abasic sites. The HMCES DNA-protein cross-link can also be degraded by the SPRTN metalloprotease following unfolding by the BRIP1/FANCJ helicase. Has preference for ssDNA, but can also accommodate double-stranded DNA with 3' or 5' overhang (dsDNA), and dsDNA-ssDNA 3' junction. Plays a protective role during somatic hypermutation of immunoglobulin genes in B-cells: acts via its ability to form covalent cross-links with abasic sites, thereby limiting the accumulation of deletions in somatic hypermutation target regions. Also involved in class switch recombination (CSR) in B-cells independently of the formation of a DNA-protein cross-link: acts by binding and protecting ssDNA overhangs to promote DNA double-strand break repair through the microhomology-mediated alternative-end-joining (Alt-EJ) pathway. Acts as a protease: mediates autocatalytic processing of its N-terminal methionine in order to expose the catalytic cysteine. The chain is Abasic site processing protein HMCES from Pongo abelii (Sumatran orangutan).